A 413-amino-acid polypeptide reads, in one-letter code: Serine hydroxymethyltransferase (413 aa).

(6S)-5,6,7,8-tetrahydrofolate is bound by residues leucine 117 and 121–123; that span reads GHL. Lysine 226 is subject to N6-(pyridoxal phosphate)lysine. (6S)-5,6,7,8-tetrahydrofolate is bound by residues glutamate 241 and 349-351; that span reads SPF.

This sequence belongs to the SHMT family. As to quaternary structure, homodimer. The cofactor is pyridoxal 5'-phosphate.

It is found in the cytoplasm. The enzyme catalyses (6R)-5,10-methylene-5,6,7,8-tetrahydrofolate + glycine + H2O = (6S)-5,6,7,8-tetrahydrofolate + L-serine. The protein operates within one-carbon metabolism; tetrahydrofolate interconversion. It participates in amino-acid biosynthesis; glycine biosynthesis; glycine from L-serine: step 1/1. Functionally, catalyzes the reversible interconversion of serine and glycine with tetrahydrofolate (THF) serving as the one-carbon carrier. This reaction serves as the major source of one-carbon groups required for the biosynthesis of purines, thymidylate, methionine, and other important biomolecules. Also exhibits THF-independent aldolase activity toward beta-hydroxyamino acids, producing glycine and aldehydes, via a retro-aldol mechanism. This Halalkalibacterium halodurans (strain ATCC BAA-125 / DSM 18197 / FERM 7344 / JCM 9153 / C-125) (Bacillus halodurans) protein is Serine hydroxymethyltransferase.